Consider the following 530-residue polypeptide: uncharacterized protein (530 aa).

This is an uncharacterized protein from Leptospira interrogans serogroup Icterohaemorrhagiae serovar Lai (strain 56601).